We begin with the raw amino-acid sequence, 321 residues long: 4-hydroxy-3-methylbut-2-enyl diphosphate reductase (321 aa).

Cysteine 13 is a [4Fe-4S] cluster binding site. (2E)-4-hydroxy-3-methylbut-2-enyl diphosphate contacts are provided by histidine 41 and histidine 75. Dimethylallyl diphosphate is bound by residues histidine 41 and histidine 75. Positions 41 and 75 each coordinate isopentenyl diphosphate. Position 97 (cysteine 97) interacts with [4Fe-4S] cluster. Histidine 125 is a (2E)-4-hydroxy-3-methylbut-2-enyl diphosphate binding site. Position 125 (histidine 125) interacts with dimethylallyl diphosphate. Residue histidine 125 coordinates isopentenyl diphosphate. Glutamate 127 (proton donor) is an active-site residue. Threonine 168 is a (2E)-4-hydroxy-3-methylbut-2-enyl diphosphate binding site. Cysteine 225 contributes to the [4Fe-4S] cluster binding site. The (2E)-4-hydroxy-3-methylbut-2-enyl diphosphate site is built by serine 253, serine 254, asparagine 255, and serine 302. 4 residues coordinate dimethylallyl diphosphate: serine 253, serine 254, asparagine 255, and serine 302. Isopentenyl diphosphate is bound by residues serine 253, serine 254, asparagine 255, and serine 302.

Belongs to the IspH family. It depends on [4Fe-4S] cluster as a cofactor.

The enzyme catalyses isopentenyl diphosphate + 2 oxidized [2Fe-2S]-[ferredoxin] + H2O = (2E)-4-hydroxy-3-methylbut-2-enyl diphosphate + 2 reduced [2Fe-2S]-[ferredoxin] + 2 H(+). It catalyses the reaction dimethylallyl diphosphate + 2 oxidized [2Fe-2S]-[ferredoxin] + H2O = (2E)-4-hydroxy-3-methylbut-2-enyl diphosphate + 2 reduced [2Fe-2S]-[ferredoxin] + 2 H(+). Its pathway is isoprenoid biosynthesis; dimethylallyl diphosphate biosynthesis; dimethylallyl diphosphate from (2E)-4-hydroxy-3-methylbutenyl diphosphate: step 1/1. It functions in the pathway isoprenoid biosynthesis; isopentenyl diphosphate biosynthesis via DXP pathway; isopentenyl diphosphate from 1-deoxy-D-xylulose 5-phosphate: step 6/6. Its function is as follows. Catalyzes the conversion of 1-hydroxy-2-methyl-2-(E)-butenyl 4-diphosphate (HMBPP) into a mixture of isopentenyl diphosphate (IPP) and dimethylallyl diphosphate (DMAPP). Acts in the terminal step of the DOXP/MEP pathway for isoprenoid precursor biosynthesis. This chain is 4-hydroxy-3-methylbut-2-enyl diphosphate reductase, found in Pelodictyon phaeoclathratiforme (strain DSM 5477 / BU-1).